Reading from the N-terminus, the 256-residue chain is Trypsinogen-like protein 3 (256 aa).

An N-terminal signal peptide occupies residues Met-1–Ala-14. Residues Ser-15–Ala-237 form the Peptidase S1 domain. 6 cysteine pairs are disulfide-bonded: Cys-23–Cys-153, Cys-41–Cys-57, Cys-125–Cys-226, Cys-132–Cys-199, Cys-164–Cys-180, and Cys-189–Cys-213.

It belongs to the peptidase S1 family.

This is Trypsinogen-like protein 3 (trp3) from Pseudopleuronectes americanus (Winter flounder).